Here is a 517-residue protein sequence, read N- to C-terminus: Zinc finger protein 215 (517 aa).

One can recognise an SCAN box domain in the interval 48–126 (RQKFRHFQYL…EDMVTLIEDV (79 aa)). The KRAB domain maps to 164 to 237 (VTFKDVVVEF…EKEIPRKTIF (74 aa)). 4 C2H2-type zinc fingers span residues 379 to 401 (YECY…QIIH), 407 to 429 (YKCS…QKLH), 462 to 484 (YECV…QMIH), and 490 to 512 (FKCK…QKLH).

The protein belongs to the krueppel C2H2-type zinc-finger protein family.

The protein resides in the nucleus. Functionally, may be involved in transcriptional regulation. The protein is Zinc finger protein 215 (ZNF215) of Pongo abelii (Sumatran orangutan).